The chain runs to 606 residues: Transmembrane 9 superfamily member 1 (606 aa).

Positions 1 to 27 (MTVLGHPRSWSCRWWPLLLLLLLTGRE) are cleaved as a signal peptide. N-linked (GlcNAc...) asparagine glycosylation is present at N178. The next 4 membrane-spanning stretches (helical) occupy residues 237–257 (LSII…AVIL), 310–330 (VLGV…MALL), 339–359 (GAIN…SGYV), and 373–393 (VWNI…TWSV). Residue N401 is glycosylated (N-linked (GlcNAc...) asparagine). The next 4 helical transmembrane spans lie at 412–432 (ILLL…IGGI), 469–489 (VGGF…FATV), 499–519 (GILF…SIAL), and 535–555 (SVLS…FYYA). N-linked (GlcNAc...) asparagine glycosylation occurs at N559. Residues 570 to 590 (FGYSLLTGYVFFLMLGTISFF) form a helical membrane-spanning segment.

It belongs to the nonaspanin (TM9SF) (TC 9.A.2) family.

It is found in the lysosome membrane. The protein localises to the cytoplasmic vesicle. The protein resides in the autophagosome membrane. In terms of biological role, plays an essential role in autophagy. The sequence is that of Transmembrane 9 superfamily member 1 (TM9SF1) from Bos taurus (Bovine).